The following is a 345-amino-acid chain: Tyrosine--tRNA ligase (345 aa).

Tyr36 contacts L-tyrosine. A 'HIGH' region motif is present at residues 41–49 (PTGEMHIGH). Residues Tyr163, Gln167, Asp170, and Gln185 each coordinate L-tyrosine.

Belongs to the class-I aminoacyl-tRNA synthetase family. TyrS type 3 subfamily. As to quaternary structure, homodimer.

It localises to the cytoplasm. The enzyme catalyses tRNA(Tyr) + L-tyrosine + ATP = L-tyrosyl-tRNA(Tyr) + AMP + diphosphate + H(+). Catalyzes the attachment of tyrosine to tRNA(Tyr) in a two-step reaction: tyrosine is first activated by ATP to form Tyr-AMP and then transferred to the acceptor end of tRNA(Tyr). The protein is Tyrosine--tRNA ligase of Natronomonas pharaonis (strain ATCC 35678 / DSM 2160 / CIP 103997 / JCM 8858 / NBRC 14720 / NCIMB 2260 / Gabara) (Halobacterium pharaonis).